The sequence spans 390 residues: Methionyl-tRNA formyltransferase, mitochondrial (390 aa).

The N-terminal 33 residues, Met1 to Ser33, are a transit peptide targeting the mitochondrion.

Belongs to the Fmt family.

It is found in the mitochondrion. It catalyses the reaction L-methionyl-tRNA(fMet) + (6R)-10-formyltetrahydrofolate = N-formyl-L-methionyl-tRNA(fMet) + (6S)-5,6,7,8-tetrahydrofolate + H(+). Methionyl-tRNA formyltransferase that formylates methionyl-tRNA in mitochondria and is crucial for translation initiation. This chain is Methionyl-tRNA formyltransferase, mitochondrial (MTFMT), found in Bos taurus (Bovine).